A 223-amino-acid chain; its full sequence is GTP cyclohydrolase 1 (223 aa).

The Zn(2+) site is built by C114, H117, and C185.

It belongs to the GTP cyclohydrolase I family. As to quaternary structure, homomer.

It carries out the reaction GTP + H2O = 7,8-dihydroneopterin 3'-triphosphate + formate + H(+). It functions in the pathway cofactor biosynthesis; 7,8-dihydroneopterin triphosphate biosynthesis; 7,8-dihydroneopterin triphosphate from GTP: step 1/1. The chain is GTP cyclohydrolase 1 from Chlorobium chlorochromatii (strain CaD3).